Here is a 276-residue protein sequence, read N- to C-terminus: Glutamate racemase (276 aa).

Residues 10 to 11 (DS) and 42 to 43 (YG) contribute to the substrate site. The active-site Proton donor/acceptor is the C74. Position 75-76 (75-76 (NT)) interacts with substrate. The active-site Proton donor/acceptor is the C185. A substrate-binding site is contributed by 186-187 (TH).

The protein belongs to the aspartate/glutamate racemases family.

The enzyme catalyses L-glutamate = D-glutamate. The protein operates within cell wall biogenesis; peptidoglycan biosynthesis. Its function is as follows. Provides the (R)-glutamate required for cell wall biosynthesis. The chain is Glutamate racemase from Levilactobacillus brevis (Lactobacillus brevis).